We begin with the raw amino-acid sequence, 309 residues long: L-arabinose 1-dehydrogenase (NAD(P)(+)) (309 aa).

NADP(+) contacts are provided by residues Ile15 and 37 to 38; that span reads SR. The Proton donor role is filled by Lys91. NADP(+) is bound at residue Asp169.

Belongs to the Gfo/Idh/MocA family. Monomer.

It carries out the reaction alpha-L-arabinopyanose + NAD(+) = L-arabinono-1,4-lactone + NADH + H(+). The enzyme catalyses alpha-L-arabinopyanose + NADP(+) = L-arabinono-1,4-lactone + NADPH + H(+). The catalysed reaction is D-galactose + NAD(+) = D-galactono-1,4-lactone + NADH + H(+). It catalyses the reaction D-galactose + NADP(+) = D-galactono-1,5-lactone + NADPH + H(+). The protein operates within carbohydrate degradation; L-arabinose degradation via L-arabinono-1,4-lactone pathway. Its function is as follows. Catalyzes the NAD(P)(+)-dependent conversion of L-arabinose to L-arabino-gamma-lactone. Is involved in a degradation pathway of L-arabinose that allows A.brasilense to grow on L-arabinose as a sole carbon source. Prefers NADP(+) to NAD(+) as electron acceptor. Displays high catalytic efficiency for both L-arabinose and D-galactose in vitro. However, the enzyme appears to be involved in the metabolism of L-arabinose but not D-galactose in vivo. To a lesser extent, is also active on D-talose and D-xylose as substrates in vitro, but not with D-arabinose, D-glucose, D-ribose, L-xylose, L-mannose, L-lyxose, and D-fructose. This chain is L-arabinose 1-dehydrogenase (NAD(P)(+)) (araA), found in Azospirillum brasilense.